Reading from the N-terminus, the 600-residue chain is Na(+)/dicarboxylate cotransporter 3 (600 aa).

Topologically, residues 1 to 16 (MAALAALAKKVWSARR) are cytoplasmic. Residues 17 to 37 (LLVLLLVPLALLPILFALPPK) traverse the membrane as a helical segment. The Extracellular segment spans residues 38–55 (EGRCLYVILLMAVYWCTE). Residues 56–76 (ALPLSVTALLPIILFPFMGIL) form a helical membrane-spanning segment. Residues 77 to 82 (PSSKVC) lie on the Cytoplasmic side of the membrane. The helical transmembrane segment at 83–103 (PQYFLDTNFLFLSGLIMASAI) threads the bilayer. Residues 104-137 (EEWNLHRRIALKVLMLVGVQPARLILGMMVTTSF) lie on the Extracellular side of the membrane. Residues 138 to 158 (LSMWLSNTASTAMMLPIASAI) traverse the membrane as a helical segment. Residues 159–229 (LKSLFGQREA…KEEEHRRNIW (71 aa)) lie on the Cytoplasmic side of the membrane. Residues 230-250 (KGFLISIPYSASIGGTATLTG) form a helical membrane-spanning segment. Topologically, residues 251–278 (TAPNLILLGQLKSFFPQCDVVNFGSWFI) are extracellular. The helical transmembrane segment at 279-299 (FAFPLMLLFLLVGWLWISFLY) threads the bilayer. The Cytoplasmic portion of the chain corresponds to 300-336 (GGMSWRSWRKKKSKIRADAEDQAKAVIQEEFQNLGPI). The helical transmembrane segment at 337–357 (KFAEQAVFILFCTFAILLFSR) threads the bilayer. The Extracellular segment spans residues 358–372 (DPKFIPGWASLFAPG). A helical transmembrane segment spans residues 373–393 (FVSDAVTGVAIVTILFFFPSQ). The Cytoplasmic portion of the chain corresponds to 394 to 422 (KPSLKWWFDFKAPNSETEPLLSWKKAQET). The segment at residues 423–443 (VPWNIILLLGGGFAMAKGCEE) is an intramembrane region (helical). At 444–461 (SGLSAWIGGQLHPLEHVP) the chain is on the cytoplasmic side. The helical transmembrane segment at 462-482 (PLLAVLLITVVIAFFTEFASN) threads the bilayer. At 483–505 (TATIIIFLPVLAELAIRLHVHPL) the chain is on the extracellular side. A helical membrane pass occupies residues 506 to 526 (YLMIPGTVGCSYAFMLPVSTP). Residues 527–546 (PNSIAFSTGHLLVKDMVRTG) are Cytoplasmic-facing. The helical transmembrane segment at 547-567 (LLMNLMGVLLLSLAMNTWAQT) threads the bilayer. Residues 568–600 (IFQLGTFPDWANTHAANATALPPALTNNTVQTF) lie on the Extracellular side of the membrane. Asn584 and Asn594 each carry an N-linked (GlcNAc...) asparagine glycan.

The protein belongs to the SLC13A/DASS transporter (TC 2.A.47) family. NADC subfamily. Highly expressed in kidney, and at much lower levels in brain.

It localises to the cell membrane. It catalyses the reaction succinate(out) + 3 Na(+)(out) = succinate(in) + 3 Na(+)(in). The catalysed reaction is 2-oxoglutarate(out) + 3 Na(+)(out) = 2-oxoglutarate(in) + 3 Na(+)(in). The enzyme catalyses N-acetyl-L-aspartate(out) + 3 Na(+)(out) = N-acetyl-L-aspartate(in) + 3 Na(+)(in). It carries out the reaction fumarate(out) + 3 Na(+)(out) = fumarate(in) + 3 Na(+)(in). It catalyses the reaction glutarate(out) + 3 Na(+)(out) = glutarate(in) + 3 Na(+)(in). The catalysed reaction is 2,2-dimethylsuccinate(out) + 3 Na(+)(out) = 2,2-dimethylsuccinate(in) + 3 Na(+)(in). The enzyme catalyses 2,3-dimethylsuccinate(out) + 3 Na(+)(out) = 2,3-dimethylsuccinate(in) + 3 Na(+)(in). It carries out the reaction malate(out) + 3 Na(+)(out) = malate(in) + 3 Na(+)(in). It catalyses the reaction itaconate(out) + 3 Na(+)(out) = itaconate(in) + 3 Na(+)(in). Functionally, high-affinity sodium-dicarboxylate cotransporter that accepts a range of substrates with 4-6 carbon atoms, such as the citric acid cycle intermediates succinate and alpha-ketoglutarate (2-oxoglutarate), as well as other compounds including N-acetyl-L-aspartate. Transports the dicarboxylate into the cell with a probable stoichiometry of 3 Na(+) for 1 divalent dicarboxylate, rendering the process electrogenic. Can transport citrate in a Na(+)-dependent manner, recognizing the divalent form of citrate rather than the trivalent form which is normally found in blood. Imports itaconate in hepatocytes leading to activation of TFEB-dependent lysosomal biogenesis involved in antibacterial innate immune response. The sequence is that of Na(+)/dicarboxylate cotransporter 3 (Slc13a3) from Mus musculus (Mouse).